A 312-amino-acid polypeptide reads, in one-letter code: MNYLLTALIALLAPISVAYNVPHGFLTGEAVTSHSGPNDLDGELPATDEVKREKRGYFFPSHFQSDSGLLSRSEHPNEYLKKWITHEHNRYRRMVPASDMNMLYWSDELAASAQRHADTCDFRHSRGRINVGENIWAAPYSNYSDAISIWFNEVHNPRCGCNHAYKHCCGHYVQVVWAKTNLVGCGFSRCRDVQGVWGRGHRNVFVCHYNPQGNTVFVTARGQLYAMPAFTWASGDNGKCSNCPANAPACYQGLCYMPKNYEAPTTTTESTTTSTTTEEPTTTCEPDEPEAEGADNNQEEEEENNDGFRMRV.

Positions 1 to 18 (MNYLLTALIALLAPISVA) are cleaved as a signal peptide. Positions 87 to 209 (EHNRYRRMVP…GHRNVFVCHY (123 aa)) constitute an SCP domain. The N-linked (GlcNAc...) asparagine glycan is linked to Asn142. Low complexity predominate over residues 265–284 (TTTTESTTTSTTTEEPTTTC). The interval 265-312 (TTTTESTTTSTTTEEPTTTCEPDEPEAEGADNNQEEEEENNDGFRMRV) is disordered. Residues 285 to 305 (EPDEPEAEGADNNQEEEEENN) show a composition bias toward acidic residues.

This sequence belongs to the CRISP family. Expressed in hypodermal tissues.

Its function is as follows. Regulates body size morphogenesis, but does not affect male tail development. The chain is Protein lon-1 (lon-1) from Caenorhabditis elegans.